The chain runs to 730 residues: LisH domain-containing protein ARMC9 (730 aa).

Positions His-7 to Gly-39 constitute a LisH domain. Residues Ser-205–Leu-242 are a coiled coil. Ser-583 carries the phosphoserine modification. The segment at Gln-675–Lys-730 is disordered.

Interacts with TOGARAM1, CCDC66, CEP104, CSPP1 and CEP290. Interacts with NDUFAF2.

It localises to the cytoplasm. Its subcellular location is the cytoskeleton. The protein localises to the cilium basal body. The protein resides in the cell projection. It is found in the cilium. It localises to the microtubule organizing center. Its subcellular location is the centrosome. The protein localises to the centriole. Functionally, involved in ciliogenesis. It is required for appropriate acetylation and polyglutamylation of ciliary microtubules, and regulation of cilium length. Acts as a positive regulator of hedgehog (Hh)signaling. May participate in the trafficking and/or retention of GLI2 and GLI3 proteins at the ciliary tip. The protein is LisH domain-containing protein ARMC9 (Armc9) of Rattus norvegicus (Rat).